Here is a 482-residue protein sequence, read N- to C-terminus: Membrane-bound lytic murein transglycosylase F (482 aa).

Positions M1–A13 are cleaved as a signal peptide. The tract at residues L14–I267 is non-LT domain. Residues S268–D482 form an LT domain region. Residue E312 is part of the active site.

It in the N-terminal section; belongs to the bacterial solute-binding protein 3 family. The protein in the C-terminal section; belongs to the transglycosylase Slt family.

The protein resides in the cell outer membrane. It carries out the reaction Exolytic cleavage of the (1-&gt;4)-beta-glycosidic linkage between N-acetylmuramic acid (MurNAc) and N-acetylglucosamine (GlcNAc) residues in peptidoglycan, from either the reducing or the non-reducing ends of the peptidoglycan chains, with concomitant formation of a 1,6-anhydrobond in the MurNAc residue.. In terms of biological role, murein-degrading enzyme that degrades murein glycan strands and insoluble, high-molecular weight murein sacculi, with the concomitant formation of a 1,6-anhydromuramoyl product. Lytic transglycosylases (LTs) play an integral role in the metabolism of the peptidoglycan (PG) sacculus. Their lytic action creates space within the PG sacculus to allow for its expansion as well as for the insertion of various structures such as secretion systems and flagella. The polypeptide is Membrane-bound lytic murein transglycosylase F (Haemophilus influenzae (strain PittEE)).